Here is a 151-residue protein sequence, read N- to C-terminus: Large ribosomal subunit protein uL22 (151 aa).

The protein belongs to the universal ribosomal protein uL22 family. As to quaternary structure, part of the 50S ribosomal subunit.

In terms of biological role, this protein binds specifically to 23S rRNA. It makes multiple contacts with different domains of the 23S rRNA in the assembled 50S subunit and ribosome. Its function is as follows. The globular domain of the protein is located near the polypeptide exit tunnel on the outside of the subunit, while an extended beta-hairpin is found that lines the wall of the exit tunnel in the center of the 70S ribosome. This chain is Large ribosomal subunit protein uL22, found in Thermofilum pendens (strain DSM 2475 / Hrk 5).